Here is a 1320-residue protein sequence, read N- to C-terminus: Sal-like protein 3 (1320 aa).

Positions 1–11 are enriched in basic residues; that stretch reads MSRRKQAKPQH. The disordered stretch occupies residues 1-49; the sequence is MSRRKQAKPQHLKSDEELPPQDGASEHGVPGDGAEDADSGSESRSGSEE. The span at 40–49 shows a compositional bias: low complexity; sequence GSESRSGSEE. The C2H2-type 1; atypical zinc finger occupies 51–73; sequence SVCEKCCAEFFKWADFLQHKKTC. Disordered regions lie at residues 84–166 and 271–367; these read DDEP…AFSM and LSAG…NLPN. Residues 88–100 are compositionally biased toward pro residues; sequence APPSEDFPEPSPA. Phosphoserine is present on S109. The span at 121-131 shows a compositional bias: basic and acidic residues; that stretch reads SEVKAATKEAE. The span at 143–160 shows a compositional bias: pro residues; that stretch reads PPGPSVPPPPPALPPQPE. Low complexity predominate over residues 271-289; it reads LSAGPATASAGSGSTLPAA. Residues 295 to 311 show a composition bias toward polar residues; sequence HLSQPASGTSTPCSTSA. 2 stretches are compositionally biased toward low complexity: residues 323–342 and 355–367; these read STGP…GNAV and PGPL…NLPN. 2 C2H2-type zinc fingers span residues 427 to 449 and 455 to 477; these read HKCR…LRSH and FKCN…FQRH. A disordered region spans residues 534 to 623; sequence GLQLPPTVPG…RTGDAPVVGG (90 aa). Residues 543-554 show a composition bias toward polar residues; sequence GTHNYTDSPSIT. The segment covering 555–568 has biased composition (low complexity); sequence PVSRSPQRPSPASS. Residues 569-583 are compositionally biased toward polar residues; the sequence is ECTSLSPGLNNTESG. C2H2-type zinc fingers lie at residues 692–714, 720–742, and 752–774; these read NQCV…YRTH, FKCK…FGVH, and HSCP…IRMH. 2 disordered regions span residues 807–846 and 878–972; these read SSFD…PPSP and VENG…GHPG. Residues 809–823 show a composition bias toward acidic residues; that stretch reads FDDDIDENSMEEDSE. Low complexity-rich tracts occupy residues 834-846 and 902-923; these read PLLS…PPSP and RSAG…PAHS. Residue S932 is modified to Phosphoserine. 4 C2H2-type zinc fingers span residues 997–1019, 1025–1047, 1133–1155, and 1161–1183; these read TVCG…YRSH, FVCT…LLTH, HNCQ…ERTH, and FGCT…MGTH. S1197 is modified (phosphoserine).

It belongs to the sal C2H2-type zinc-finger protein family. In adult brain, testis and kidney. In lower levels also in adult ovaries and embryonic stem cells. In embryo in developing neuroectoderm of brain, inner ear and spinal cord. Also weakly and transiently expressed in embryonic branchial arches, notochord, limb buds and heart.

It is found in the nucleus. Functionally, probable transcription factor. The protein is Sal-like protein 3 (Sall3) of Mus musculus (Mouse).